Here is a 430-residue protein sequence, read N- to C-terminus: MYCALVTATDSITTKLLNAFRPRTSAPSTATVLRSVLWPIAILSVIHRSYVLGTNGYITDDFGPVYRAVINFKLGLDIYNEQFDHVDPHYLYPPGGTLLLAPFGYLPVDASRYWYISFNVLAFLIAAYLMLRIFDYTLSSVAAPALVLAMFCTESVTNTLVFTNINGCMLLGAVLFFRWLLKGGRNAELLAGAAIGLTLVVKPSLAPLLLLPVLNRQFYTLITAFGVPLVFNIAAWPLVPDPMNFVRHTVPYIMSTRDYFNSSIVGNGIYYGLPMWLILLLRVVFLLLAVGSLWLLYRYYRERDPRFWLLTSSGVLLTASFLLLSLGQGYYSTMLFPFLMTVVLPNSVLRNWPAWLAIYGFMTMDRWLLGHWPTTGRFLEYMKITYGWSLMLVVVFCVLYFRYLDAKQDGRLDQGIDPPWMARERTPAPV.

The next 10 membrane-spanning stretches (helical) occupy residues 26-46 (APSTATVLRSVLWPIAILSVI), 114-134 (WYISFNVLAFLIAAYLMLRIF), 136-156 (YTLSSVAAPALVLAMFCTESV), 160-180 (LVFTNINGCMLLGAVLFFRWL), 194-214 (AIGLTLVVKPSLAPLLLLPVL), 218-238 (FYTLITAFGVPLVFNIAAWPL), 276-296 (WLILLLRVVFLLLAVGSLWLL), 307-327 (FWLLTSSGVLLTASFLLLSLG), 352-372 (WPAWLAIYGFMTMDRWLLGHW), and 381-401 (YMKITYGWSLMLVVVFCVLYF).

Belongs to the glycosyltransferase 87 family.

The protein resides in the cell membrane. It carries out the reaction Adds an alpha-D-arabinofuranosyl group from trans,octacis-decaprenylphospho-beta-D-arabinofuranose at the 3-O-position of an alpha-(1-&gt;5)-arabinofuranan chain attached to a beta-(1-&gt;5)-galactofuranan chain.. It functions in the pathway cell wall biogenesis; cell wall polysaccharide biosynthesis. Its function is as follows. Involved in the biosynthesis of the arabinogalactan (AG) region of the mycolylarabinogalactan-peptidoglycan (mAGP) complex, an essential component of the mycobacterial cell wall. Catalyzes the addition of an arabinofuranosyl (Araf) residue from the sugar donor beta-D-arabinofuranosyl-1-monophosphoryldecaprenol (DPA) on the C-3 of an alpha-(1-&gt;5)-linked Araf from the arabinan backbone of AG. The protein is Alpha-(1-&gt;3)-arabinofuranosyltransferase (aftC) of Mycolicibacterium smegmatis (strain ATCC 700084 / mc(2)155) (Mycobacterium smegmatis).